A 389-amino-acid chain; its full sequence is Major outer membrane porin (389 aa).

An N-terminal signal peptide occupies residues 1 to 22 (MKKLLKSALLFAATGSALSLQA).

Belongs to the chlamydial porin (CP) (TC 1.B.2) family. In terms of assembly, part of a disulfide cross-linked outer membrane complex (COMC) composed of the major outer membrane porin (MOMP), the small cysteine-rich protein (OmcA) and the large cysteine-rich periplasmic protein (OmcB).

The protein localises to the cell outer membrane. In elementary bodies (EBs, the infectious stage, which is able to survive outside the host cell) provides the structural integrity of the outer envelope through disulfide cross-links with the small cysteine-rich protein and the large cysteine-rich periplasmic protein. It has been described in publications as the Sarkosyl-insoluble COMC (Chlamydia outer membrane complex), and serves as the functional equivalent of peptidoglycan. In terms of biological role, permits diffusion of specific solutes through the outer membrane. This is Major outer membrane porin (ompA) from Chlamydia abortus (strain DSM 27085 / S26/3) (Chlamydophila abortus).